The sequence spans 430 residues: UDP-N-acetylglucosamine 1-carboxyvinyltransferase (430 aa).

Residue 22 to 23 participates in phosphoenolpyruvate binding; that stretch reads KN. Position 102 (arginine 102) interacts with UDP-N-acetyl-alpha-D-glucosamine. The active-site Proton donor is the cysteine 126. A 2-(S-cysteinyl)pyruvic acid O-phosphothioketal modification is found at cysteine 126. UDP-N-acetyl-alpha-D-glucosamine is bound by residues 131–135, 172–175, aspartate 317, and isoleucine 339; these read RPVDL and KVSV.

Belongs to the EPSP synthase family. MurA subfamily.

It localises to the cytoplasm. The catalysed reaction is phosphoenolpyruvate + UDP-N-acetyl-alpha-D-glucosamine = UDP-N-acetyl-3-O-(1-carboxyvinyl)-alpha-D-glucosamine + phosphate. Its pathway is cell wall biogenesis; peptidoglycan biosynthesis. Its function is as follows. Cell wall formation. Adds enolpyruvyl to UDP-N-acetylglucosamine. This Sinorhizobium medicae (strain WSM419) (Ensifer medicae) protein is UDP-N-acetylglucosamine 1-carboxyvinyltransferase.